The primary structure comprises 151 residues: UPF0178 protein YaiI (151 aa).

It belongs to the UPF0178 family.

This Salmonella enteritidis PT4 (strain P125109) protein is UPF0178 protein YaiI.